Here is a 53-residue protein sequence, read N- to C-terminus: ATP synthase protein 8 (53 aa).

A helical transmembrane segment spans residues tryptophan 9–phenylalanine 29.

This sequence belongs to the ATPase protein 8 family. F-type ATPases have 2 components, CF(1) - the catalytic core - and CF(0) - the membrane proton channel.

The protein resides in the mitochondrion membrane. Mitochondrial membrane ATP synthase (F(1)F(0) ATP synthase or Complex V) produces ATP from ADP in the presence of a proton gradient across the membrane which is generated by electron transport complexes of the respiratory chain. F-type ATPases consist of two structural domains, F(1) - containing the extramembraneous catalytic core and F(0) - containing the membrane proton channel, linked together by a central stalk and a peripheral stalk. During catalysis, ATP synthesis in the catalytic domain of F(1) is coupled via a rotary mechanism of the central stalk subunits to proton translocation. Part of the complex F(0) domain. Minor subunit located with subunit a in the membrane. The chain is ATP synthase protein 8 (mt:ATPase8) from Bombyx mori (Silk moth).